A 779-amino-acid polypeptide reads, in one-letter code: Phosphoribosylformylglycinamidine synthase subunit PurL (779 aa).

Residue His52 is part of the active site. ATP-binding residues include Tyr55 and Lys94. Glu96 lines the Mg(2+) pocket. Substrate is bound by residues 97–100 (SHNH) and Arg119. His98 acts as the Proton acceptor in catalysis. Asp120 contacts Mg(2+). Gln243 is a substrate binding site. Mg(2+) is bound at residue Asp271. Residue 315–317 (ESQ) coordinates substrate. ATP contacts are provided by Asn523 and Gly560. Asn561 is a binding site for Mg(2+). Residue Ser563 participates in substrate binding.

The protein belongs to the FGAMS family. As to quaternary structure, monomer. Part of the FGAM synthase complex composed of 1 PurL, 1 PurQ and 2 PurS subunits.

Its subcellular location is the cytoplasm. The enzyme catalyses N(2)-formyl-N(1)-(5-phospho-beta-D-ribosyl)glycinamide + L-glutamine + ATP + H2O = 2-formamido-N(1)-(5-O-phospho-beta-D-ribosyl)acetamidine + L-glutamate + ADP + phosphate + H(+). It participates in purine metabolism; IMP biosynthesis via de novo pathway; 5-amino-1-(5-phospho-D-ribosyl)imidazole from N(2)-formyl-N(1)-(5-phospho-D-ribosyl)glycinamide: step 1/2. Functionally, part of the phosphoribosylformylglycinamidine synthase complex involved in the purines biosynthetic pathway. Catalyzes the ATP-dependent conversion of formylglycinamide ribonucleotide (FGAR) and glutamine to yield formylglycinamidine ribonucleotide (FGAM) and glutamate. The FGAM synthase complex is composed of three subunits. PurQ produces an ammonia molecule by converting glutamine to glutamate. PurL transfers the ammonia molecule to FGAR to form FGAM in an ATP-dependent manner. PurS interacts with PurQ and PurL and is thought to assist in the transfer of the ammonia molecule from PurQ to PurL. This is Phosphoribosylformylglycinamidine synthase subunit PurL from Prochlorococcus marinus (strain MIT 9312).